The following is a 767-amino-acid chain: DNA topoisomerase 1 (767 aa).

Residues 1-23 (MSGDHLHNDSQIEADFRLNDSHK) are compositionally biased toward basic and acidic residues. The tract at residues 1–201 (MSGDHLHNDS…NKKKKPKKEE (201 aa)) is disordered. S2 is modified (N-acetylserine). Residues S2 and S10 each carry the phosphoserine modification. The segment covering 24–39 (HKDKHKDREHRHKEHK) has biased composition (basic residues). A compositionally biased stretch (basic and acidic residues) spans 40 to 110 (KDKEKDREKS…DAKIKKEKEN (71 aa)). S59 carries the post-translational modification Phosphoserine. A Glycyl lysine isopeptide (Lys-Gly) (interchain with G-Cter in SUMO2) cross-link involves residue K103. K105 participates in a covalent cross-link: Glycyl lysine isopeptide (Lys-Gly) (interchain with G-Cter in SUMO); alternate. K105 is covalently cross-linked (Glycyl lysine isopeptide (Lys-Gly) (interchain with G-Cter in SUMO2); alternate). At S114 the chain carries Phosphoserine. K119 is covalently cross-linked (Glycyl lysine isopeptide (Lys-Gly) (interchain with G-Cter in SUMO); alternate). A Glycyl lysine isopeptide (Lys-Gly) (interchain with G-Cter in SUMO2); alternate cross-link involves residue K119. Residue K119 forms a Glycyl lysine isopeptide (Lys-Gly) (interchain with G-Cter in SUMO1); alternate linkage. The span at 131 to 168 (PKEDIKPLKRPRDEDDADYKPKKIKTEDIKKEKKRKLE) shows a compositional bias: basic and acidic residues. Glycyl lysine isopeptide (Lys-Gly) (interchain with G-Cter in SUMO2) cross-links involve residues K136 and K150. A Glycyl lysine isopeptide (Lys-Gly) (interchain with G-Cter in SUMO); alternate cross-link involves residue K155. K155 participates in a covalent cross-link: Glycyl lysine isopeptide (Lys-Gly) (interchain with G-Cter in SUMO2); alternate. Glycyl lysine isopeptide (Lys-Gly) (interchain with G-Cter in SUMO2) cross-links involve residues K160 and K166. A Glycyl lysine isopeptide (Lys-Gly) (interchain with G-Cter in SUMO2); alternate cross-link involves residue K174. K174 is subject to N6-acetyllysine; alternate. Residues 181-201 (KDKDKKGAESDNKKKKPKKEE) are compositionally biased toward basic and acidic residues. K206 is covalently cross-linked (Glycyl lysine isopeptide (Lys-Gly) (interchain with G-Cter in SUMO2)). K282 bears the N6-acetyllysine mark. K338 is covalently cross-linked (Glycyl lysine isopeptide (Lys-Gly) (interchain with G-Cter in SUMO2)). Interaction with DNA regions lie at residues 427 to 428 (KY) and 490 to 495 (RAGNEK). The Topo IB-type catalytic domain occupies 434–767 (SSRIKGEKDW…IDMTDEDYEF (334 aa)). S508 carries the phosphoserine; by CK2 modification. K551 is covalently cross-linked (Glycyl lysine isopeptide (Lys-Gly) (interchain with G-Cter in SUMO2)). The segment at 587 to 589 (TAK) is interaction with DNA. Glycyl lysine isopeptide (Lys-Gly) (interchain with G-Cter in SUMO2) cross-links involve residues K644, K702, and K714. The active-site O-(3'-phospho-DNA)-tyrosine intermediate is Y725.

Belongs to the type IB topoisomerase family. As to quaternary structure, monomer. Interacts with ERCC6. Interacts with TPRN; TPRN interacts with a number of DNA damage response proteins, is recruited to sites of DNA damage and may play a role in DNA damage repair. Sumoylated. Lys-119 is the main site of sumoylation. Sumoylation plays a role in partitioning TOP1 between nucleoli and nucleoplasm. Levels are dramatically increased on camptothecin (CPT) treatment. In terms of processing, phosphorylation at Ser-508 by CK2 increases binding to supercoiled DNA and sensitivity to camptothecin.

It is found in the nucleus. Its subcellular location is the nucleolus. It localises to the nucleoplasm. It catalyses the reaction ATP-independent breakage of single-stranded DNA, followed by passage and rejoining.. With respect to regulation, specifically inhibited by camptothecin (CPT), a plant alkaloid with antitumor activity. Functionally, releases the supercoiling and torsional tension of DNA introduced during the DNA replication and transcription by transiently cleaving and rejoining one strand of the DNA duplex. Introduces a single-strand break via transesterification at a target site in duplex DNA. The scissile phosphodiester is attacked by the catalytic tyrosine of the enzyme, resulting in the formation of a DNA-(3'-phosphotyrosyl)-enzyme intermediate and the expulsion of a 5'-OH DNA strand. The free DNA strand then rotates around the intact phosphodiester bond on the opposing strand, thus removing DNA supercoils. Finally, in the religation step, the DNA 5'-OH attacks the covalent intermediate to expel the active-site tyrosine and restore the DNA phosphodiester backbone. Regulates the alternative splicing of tissue factor (F3) pre-mRNA in endothelial cells. Involved in the circadian transcription of the core circadian clock component BMAL1 by altering the chromatin structure around the ROR response elements (ROREs) on the BMAL1 promoter. This chain is DNA topoisomerase 1 (TOP1), found in Cricetulus griseus (Chinese hamster).